The primary structure comprises 68 residues: uncharacterized protein (68 aa).

This is an uncharacterized protein from Homo sapiens (Human).